We begin with the raw amino-acid sequence, 364 residues long: Chorismate synthase (364 aa).

Residues 41–60 form a disordered region; the sequence is MQHDLDRRRPGTSRYTTARR. NADP(+) contacts are provided by Arg48 and Arg54. FMN-binding positions include 125-127, 238-239, Gly278, 293-297, and Arg319; these read RSS, NA, and KPTSS.

This sequence belongs to the chorismate synthase family. As to quaternary structure, homotetramer. The cofactor is FMNH2.

The enzyme catalyses 5-O-(1-carboxyvinyl)-3-phosphoshikimate = chorismate + phosphate. Its pathway is metabolic intermediate biosynthesis; chorismate biosynthesis; chorismate from D-erythrose 4-phosphate and phosphoenolpyruvate: step 7/7. Catalyzes the anti-1,4-elimination of the C-3 phosphate and the C-6 proR hydrogen from 5-enolpyruvylshikimate-3-phosphate (EPSP) to yield chorismate, which is the branch point compound that serves as the starting substrate for the three terminal pathways of aromatic amino acid biosynthesis. This reaction introduces a second double bond into the aromatic ring system. This chain is Chorismate synthase, found in Shewanella baltica (strain OS185).